Reading from the N-terminus, the 168-residue chain is DOMON domain-containing protein CBG21753 (168 aa).

An N-terminal signal peptide occupies residues 1 to 17 (MIKSMILVALILAFASA). Residues 25 to 143 (SGFQSYWRFA…CQKWRWIKSG (119 aa)) form the DOMON domain. Residues asparagine 35 and asparagine 94 are each glycosylated (N-linked (GlcNAc...) asparagine). Residues 148 to 168 (GQLTRNSKSPKDKKVCPMECN) are disordered. Over residues 156–168 (SPKDKKVCPMECN) the composition is skewed to basic and acidic residues.

It localises to the secreted. This chain is DOMON domain-containing protein CBG21753, found in Caenorhabditis briggsae.